Reading from the N-terminus, the 276-residue chain is D-aminoacyl-tRNA deacylase (276 aa).

The protein belongs to the DtdA deacylase family. As to quaternary structure, monomer. The cofactor is Zn(2+).

It catalyses the reaction a D-aminoacyl-tRNA + H2O = a tRNA + a D-alpha-amino acid + H(+). It carries out the reaction glycyl-tRNA(Ala) + H2O = tRNA(Ala) + glycine + H(+). Functionally, D-aminoacyl-tRNA deacylase with broad substrate specificity. By recycling D-aminoacyl-tRNA to D-amino acids and free tRNA molecules, this enzyme counteracts the toxicity associated with the formation of D-aminoacyl-tRNA entities in vivo. This chain is D-aminoacyl-tRNA deacylase, found in Staphylothermus marinus (strain ATCC 43588 / DSM 3639 / JCM 9404 / F1).